Consider the following 906-residue polypeptide: Kinesin-like protein KIN-7G (906 aa).

The Kinesin motor domain maps to 26–344; sequence SVAVAVRFRP…LKFAHRAKHI (319 aa). Position 105–112 (105–112) interacts with ATP; the sequence is GVTSSGKT. Coiled coils occupy residues 346-385, 733-814, and 839-875; these read IQAT…RTGT, SDEF…GRNQ, and GDMN…LEKE. The tract at residues 803-840 is disordered; it reads RLSSELASGRNQRRGSHGPRGARRESHTKRYEPARRGD. The span at 813–823 shows a compositional bias: basic residues; the sequence is NQRRGSHGPRG. The span at 824–840 shows a compositional bias: basic and acidic residues; sequence ARRESHTKRYEPARRGD.

Belongs to the TRAFAC class myosin-kinesin ATPase superfamily. Kinesin family. KIN-7 subfamily.

This chain is Kinesin-like protein KIN-7G, found in Oryza sativa subsp. japonica (Rice).